A 219-amino-acid chain; its full sequence is Transcriptional regulator AcuR (219 aa).

The disordered stretch occupies residues M1 to A25. The HTH tetR-type domain occupies S26–F86. The segment at residues G49–F68 is a DNA-binding region (H-T-H motif).

Functionally, a transcriptional repressor for its operon. Probably binds to 2 operator sequences in the promoter. This chain is Transcriptional regulator AcuR (acuR), found in Cereibacter sphaeroides (strain ATCC 17023 / DSM 158 / JCM 6121 / CCUG 31486 / LMG 2827 / NBRC 12203 / NCIMB 8253 / ATH 2.4.1.) (Rhodobacter sphaeroides).